A 548-amino-acid polypeptide reads, in one-letter code: MHIPHFHLHKGPKGVRTISYEQLLSEDDSYASEKLSEDHVTEVHFVTDKDEDSNASGESRGSMELLENCFSLLHAQDDTSKFVSLTMLAKLLNDHPNLIFKCWERMDMKFLDRLLLSTHYEYVDLGVSILLAFCSEEAILRSYEVKKRVSTLLQCCLKHYDLCIPVICTLSSNPKSAKYLLYYTSFIINEFPFEQAFEILSNALYALDNVQTYMRPIFQGIDKRRGWKLDCTFSFFSDLFSRFPVQSWYSEAIRANLQPLMDAVVERFITDKNLSSATVILSNLLKAAGPASIMPNDGFMILVIGRCSAEIRGSLGMLVKAVGQKGKHGTVSYTVCECYEVLGLLIRYLCENCDVLAQRIEPDKFFQLQRSLTELFSDTMDFLRDAWDNNKNRDNLASHVTVISAVATLCLWLTEDDSQYAQASGLMDIFVYLWRHSWSNGIDYAKWISVALPSMLSNKVFFKAFKDFDAWKVVYDDFIKCNDDLKGDKSFNDYILSTNEEDGEDERLAQAIQDFHILIQLNSLVPQSIWNDDIWQEPYWKNLLESNF.

Phosphoserine is present on residues Ser-19 and Ser-25. The residue at position 47 (Thr-47) is a Phosphothreonine.

This is an uncharacterized protein from Schizosaccharomyces pombe (strain 972 / ATCC 24843) (Fission yeast).